The chain runs to 333 residues: Homoserine O-succinyltransferase (333 aa).

The active-site Acyl-thioester intermediate is cysteine 147. Lysine 168 and serine 196 together coordinate substrate. Histidine 239 (proton acceptor) is an active-site residue. Residue glutamate 241 is part of the active site. Arginine 253 provides a ligand contact to substrate.

It belongs to the MetA family.

It localises to the cytoplasm. It carries out the reaction L-homoserine + succinyl-CoA = O-succinyl-L-homoserine + CoA. The protein operates within amino-acid biosynthesis; L-methionine biosynthesis via de novo pathway; O-succinyl-L-homoserine from L-homoserine: step 1/1. Its function is as follows. Transfers a succinyl group from succinyl-CoA to L-homoserine, forming succinyl-L-homoserine. The sequence is that of Homoserine O-succinyltransferase from Rhodopseudomonas palustris.